A 1017-amino-acid chain; its full sequence is Anaphase-promoting complex subunit 5 (1017 aa).

TPR repeat units follow at residues 30-63 (KQSL…EKEL), 182-214 (DMSM…SPLD), 252-286 (VKRV…VNGQ), 337-370 (PYAV…AQER), and 508-541 (NNNN…WNDI). Residues 451 to 525 (INSNNYNSNN…NNNSSNSNNN (75 aa)) are compositionally biased toward low complexity. 2 disordered regions span residues 451–527 (INSN…NNGG) and 617–636 (NNNN…QQQN). TPR repeat units follow at residues 642-675 (LLSF…YKTQ), 756-790 (VICY…SRDF), 838-871 (ADSN…VLSD), 876-908 (SQLY…FLQL), and 931-964 (KEIY…LVPS).

Belongs to the APC5 family. The APC/C is composed of at least 13 subunits that stay tightly associated throughout the cell cycle: anapc1, anapc2, anapc3, anapc4, anapc5, anapc6, anapc7, anapc8, anapc10, anapc11, cdc20, cdc26 and cdh1.

The protein localises to the nucleus. The protein operates within protein modification; protein ubiquitination. Component of the anaphase promoting complex/cyclosome (APC/C), a cell cycle-regulated E3 ubiquitin-protein ligase complex that controls progression through mitosis and the G1 phase of the cell cycle. The protein is Anaphase-promoting complex subunit 5 (anapc5) of Dictyostelium discoideum (Social amoeba).